Consider the following 208-residue polypeptide: Glycerol-3-phosphate acyltransferase (208 aa).

5 helical membrane-spanning segments follow: residues 4–24, 56–76, 80–100, 117–137, and 139–159; these read LALS…AVLI, VAVL…GYFL, PFML…PIFF, PIGL…VVLF, and YSSL…WLIK.

The protein belongs to the PlsY family. In terms of assembly, probably interacts with PlsX.

Its subcellular location is the cell inner membrane. The catalysed reaction is an acyl phosphate + sn-glycerol 3-phosphate = a 1-acyl-sn-glycero-3-phosphate + phosphate. The protein operates within lipid metabolism; phospholipid metabolism. Catalyzes the transfer of an acyl group from acyl-phosphate (acyl-PO(4)) to glycerol-3-phosphate (G3P) to form lysophosphatidic acid (LPA). This enzyme utilizes acyl-phosphate as fatty acyl donor, but not acyl-CoA or acyl-ACP. This chain is Glycerol-3-phosphate acyltransferase, found in Vibrio cholerae serotype O1 (strain ATCC 39541 / Classical Ogawa 395 / O395).